The sequence spans 465 residues: CUGBP Elav-like family member 3 (465 aa).

RRM domains lie at 7–88 (IKLF…PADS) and 95–174 (KLFV…FADT). Disordered stretches follow at residues 283–311 (PVPT…QSPA) and 345–379 (PPAL…GPDG). Pro residues predominate over residues 345–358 (PPALVAQQPPPPPQ). A compositionally biased stretch (low complexity) spans 359-373 (QQQQQQQQQQQQQQQ). The RRM 3 domain maps to 380 to 458 (CNIFIYHLPQ…KRLKVQLKRP (79 aa)).

This sequence belongs to the CELF/BRUNOL family.

The protein resides in the nucleus. It localises to the cytoplasm. RNA-binding protein involved in the regulation of pre-mRNA alternative splicing. Mediates exon inclusion and/or exclusion in pre-mRNA that are subject to tissue-specific and developmentally regulated alternative splicing. Specifically activates exon 5 inclusion of cardiac isoforms of TNNT2 during heart remodeling at the juvenile to adult transition. Activates the splicing of MAPT/Tau exon 10. Binds to muscle-specific splicing enhancer (MSE) intronic sites flanking the alternative exon 5 of TNNT2 pre-mRNA. The sequence is that of CUGBP Elav-like family member 3 (Celf3) from Mus musculus (Mouse).